Here is a 312-residue protein sequence, read N- to C-terminus: Taste receptor type 2 member 62 (312 aa).

Over 1–4 (MPSL) the chain is Extracellular. The chain crosses the membrane as a helical span at residues 5 to 27 (PTLIFIAIFCLESLAAMLQNGFL). Over 28-39 (VTMLGREWVRCR) the chain is Cytoplasmic. Residues 40–62 (MLSTSDMIVACLAASRFCLHGVA) form a helical membrane-spanning segment. The Extracellular segment spans residues 63 to 81 (MANNLLASLDFSRAVPYMN). Residues 82–104 (IFWDLFNALTLWFTALLAAFYCV) traverse the membrane as a helical segment. The Cytoplasmic portion of the chain corresponds to 105–127 (KISSFSHPTFAWLKWRISRLVPK). The helical transmembrane segment at 128 to 150 (LIKGSLIICGLEVISSATGNILF) threads the bilayer. The Extracellular segment spans residues 151-182 (GQRKVSLSSYRNETLVYRVQASFQLYFFLYDG). Residue N162 is glycosylated (N-linked (GlcNAc...) asparagine). Residues 183-205 (FVWSIPFLLFLVSTVLLIVSLCW) form a helical membrane-spanning segment. The Cytoplasmic segment spans residues 206-231 (QLGQMRDLRPGPCDPSTQAYTMALKS). A helical membrane pass occupies residues 232-254 (LTFSLIFCTLYFLSLFASALKII). The Extracellular portion of the chain corresponds to 255-258 (NFQN). The helical transmembrane segment at 259 to 281 (HWHWAWEVLIYANICLHSTVLVL) threads the bilayer. Over 282-312 (RSPKLKKGLKTWPQLQCPCDAGSQGFGRCWP) the chain is Cytoplasmic.

The protein belongs to the G-protein coupled receptor T2R family.

It is found in the membrane. Functionally, receptor that may play a role in the perception of bitterness and is gustducin-linked. May play a role in sensing the chemical composition of the gastrointestinal content. The activity of this receptor may stimulate alpha gustducin, mediate PLC-beta-2 activation and lead to the gating of TRPM5. In Pan paniscus (Pygmy chimpanzee), this protein is Taste receptor type 2 member 62 (TAS2R62).